The sequence spans 921 residues: Protein translocase subunit SecA (921 aa).

ATP-binding positions include glutamine 87, 105 to 109, and aspartate 501; that span reads GEGKT. Residues 831–886 are disordered; the sequence is PFPVINTETSGPSEEPAGLFSQGTTGGDIPAPQPMAGFPSAAPMPPRPQPVPTGAE. A compositionally biased stretch (pro residues) spans 872-881; sequence APMPPRPQPV. Zn(2+)-binding residues include cysteine 905, cysteine 907, cysteine 916, and histidine 917.

It belongs to the SecA family. As to quaternary structure, monomer and homodimer. Part of the essential Sec protein translocation apparatus which comprises SecA, SecYEG and auxiliary proteins SecDF-YajC and YidC. Zn(2+) serves as cofactor.

It is found in the cell inner membrane. The protein resides in the cytoplasm. It catalyses the reaction ATP + H2O + cellular proteinSide 1 = ADP + phosphate + cellular proteinSide 2.. Functionally, part of the Sec protein translocase complex. Interacts with the SecYEG preprotein conducting channel. Has a central role in coupling the hydrolysis of ATP to the transfer of proteins into and across the cell membrane, serving both as a receptor for the preprotein-SecB complex and as an ATP-driven molecular motor driving the stepwise translocation of polypeptide chains across the membrane. In Gluconobacter oxydans (strain 621H) (Gluconobacter suboxydans), this protein is Protein translocase subunit SecA.